We begin with the raw amino-acid sequence, 73 residues long: UPF0435 protein lin1819 (73 aa).

It belongs to the UPF0435 family.

This Listeria innocua serovar 6a (strain ATCC BAA-680 / CLIP 11262) protein is UPF0435 protein lin1819.